The following is a 242-amino-acid chain: Ribosomal RNA small subunit methyltransferase G (242 aa).

Residues Gly-78, Phe-83, 129 to 130 (AE), and Arg-148 each bind S-adenosyl-L-methionine. Residues 221 to 242 (TKKRYPRKAGVPEKSPIGGKHD) are disordered.

It belongs to the methyltransferase superfamily. RNA methyltransferase RsmG family.

The protein localises to the cytoplasm. Its function is as follows. Specifically methylates the N7 position of a guanine in 16S rRNA. The polypeptide is Ribosomal RNA small subunit methyltransferase G (Oenococcus oeni (strain ATCC BAA-331 / PSU-1)).